The chain runs to 216 residues: MRLILLGPPGAGKGTQAQRIVEKHGIPQLSTGDMLRAAVAAGTEVGKRAKAVMDAGKLVSDDIVNAIVSERIDQPDCARGFILDGFPRTLVQADATEAMLKAKGLELSAVIEIKVDDAVLADRISGRYTCANCGAGYHDENLRPKVEGVCDRCGSTHFKRRADDNRETVVERLQVYYKETSPLIGYYYAKGKLQSVDGMADIEHVTANIEAILSKL.

Residue Gly-10 to Thr-15 coordinates ATP. An NMP region spans residues Ser-30–Val-59. AMP contacts are provided by residues Thr-31, Arg-36, Lys-57–Val-59, Gly-85–Arg-88, and Gln-92. The segment at Gly-126–Asp-163 is LID. ATP is bound at residue Arg-127. Zn(2+) contacts are provided by Cys-130, Cys-133, Cys-150, and Cys-153. 2 residues coordinate AMP: Arg-160 and Arg-172. Ala-200 contacts ATP.

This sequence belongs to the adenylate kinase family. As to quaternary structure, monomer.

The protein resides in the cytoplasm. It catalyses the reaction AMP + ATP = 2 ADP. It participates in purine metabolism; AMP biosynthesis via salvage pathway; AMP from ADP: step 1/1. In terms of biological role, catalyzes the reversible transfer of the terminal phosphate group between ATP and AMP. Plays an important role in cellular energy homeostasis and in adenine nucleotide metabolism. The chain is Adenylate kinase from Rhizobium rhizogenes (strain K84 / ATCC BAA-868) (Agrobacterium radiobacter).